The primary structure comprises 146 residues: Acidic phospholipase A2 2 (146 aa).

The first 21 residues, 1-21 (MNPAHLLILAAVCVSSLGASS), serve as a signal peptide directing secretion. Positions 22–27 (NRPMPL) are excised as a propeptide. 7 cysteine pairs are disulfide-bonded: cysteine 38–cysteine 98, cysteine 53–cysteine 145, cysteine 55–cysteine 71, cysteine 70–cysteine 126, cysteine 77–cysteine 119, cysteine 87–cysteine 112, and cysteine 105–cysteine 117. 3 residues coordinate Ca(2+): tyrosine 54, glycine 56, and glycine 58. The active site involves histidine 74. Aspartate 75 is a binding site for Ca(2+). Residue aspartate 120 is part of the active site.

Belongs to the phospholipase A2 family. Group I subfamily. D49 sub-subfamily. Ca(2+) serves as cofactor. In terms of tissue distribution, expressed by the venom gland.

Its subcellular location is the secreted. The catalysed reaction is a 1,2-diacyl-sn-glycero-3-phosphocholine + H2O = a 1-acyl-sn-glycero-3-phosphocholine + a fatty acid + H(+). Functionally, PLA2 catalyzes the calcium-dependent hydrolysis of the 2-acyl groups in 3-sn-phosphoglycerides. In Naja kaouthia (Monocled cobra), this protein is Acidic phospholipase A2 2.